Consider the following 115-residue polypeptide: Large ribosomal subunit protein bL19 (115 aa).

The protein belongs to the bacterial ribosomal protein bL19 family.

Functionally, this protein is located at the 30S-50S ribosomal subunit interface and may play a role in the structure and function of the aminoacyl-tRNA binding site. This is Large ribosomal subunit protein bL19 from Clostridium kluyveri (strain ATCC 8527 / DSM 555 / NBRC 12016 / NCIMB 10680 / K1).